A 363-amino-acid chain; its full sequence is tRNA(Met) cytidine acetate ligase (363 aa).

Residues 7-20 (IAEY…HKYL), Gly-96, Asn-152, and Arg-175 contribute to the ATP site.

This sequence belongs to the TmcAL family.

The protein resides in the cytoplasm. The catalysed reaction is cytidine(34) in elongator tRNA(Met) + acetate + ATP = N(4)-acetylcytidine(34) in elongator tRNA(Met) + AMP + diphosphate. Functionally, catalyzes the formation of N(4)-acetylcytidine (ac(4)C) at the wobble position of elongator tRNA(Met), using acetate and ATP as substrates. First activates an acetate ion to form acetyladenylate (Ac-AMP) and then transfers the acetyl group to tRNA to form ac(4)C34. In Streptococcus suis (strain 98HAH33), this protein is tRNA(Met) cytidine acetate ligase.